We begin with the raw amino-acid sequence, 57 residues long: Large ribosomal subunit protein bL33 (57 aa).

This sequence belongs to the bacterial ribosomal protein bL33 family.

This Shewanella sp. (strain MR-4) protein is Large ribosomal subunit protein bL33.